A 354-amino-acid polypeptide reads, in one-letter code: Inactive ADP-ribosyltransferase ARH2 (354 aa).

S27 carries the phosphoserine modification.

It belongs to the ADP-ribosylglycohydrolase family.

Its subcellular location is the cytoplasm. It is found in the myofibril. The protein localises to the sarcomere. Its function is as follows. Required for myofibril assembly and outgrowth of the cardiac chambers in the developing heart. Appears to be catalytically inactive, showing no activity against O-acetyl-ADP-ribose. In Bos taurus (Bovine), this protein is Inactive ADP-ribosyltransferase ARH2 (ADPRHL1).